Reading from the N-terminus, the 156-residue chain is Small ribosomal subunit protein uS7 (156 aa).

Belongs to the universal ribosomal protein uS7 family. As to quaternary structure, part of the 30S ribosomal subunit. Contacts proteins S9 and S11.

Functionally, one of the primary rRNA binding proteins, it binds directly to 16S rRNA where it nucleates assembly of the head domain of the 30S subunit. Is located at the subunit interface close to the decoding center, probably blocks exit of the E-site tRNA. This Nitrosococcus oceani (strain ATCC 19707 / BCRC 17464 / JCM 30415 / NCIMB 11848 / C-107) protein is Small ribosomal subunit protein uS7.